The sequence spans 276 residues: SRR1-like protein (276 aa).

S30 is modified (phosphoserine). Y34 is subject to Phosphotyrosine.

This sequence belongs to the SRR1 family.

Possible regulator involved in a circadian clock input pathway. In Drosophila melanogaster (Fruit fly), this protein is SRR1-like protein.